The following is a 168-amino-acid chain: Iron-sulfur cluster assembly enzyme ISCU (168 aa).

The N-terminal 35 residues, 1 to 35, are a transit peptide targeting the mitochondrion; it reads MAAATGAGRLRRAASALLLRSPRLPARELSAPARL. S15 bears the Phosphoserine mark. C70 (cysteine persulfide intermediate) is an active-site residue. A Cysteine persulfide modification is found at C70. Zn(2+) contacts are provided by D72, C96, and C139. C139 (cysteine persulfide intermediate) is an active-site residue. At C139 the chain carries Cysteine persulfide.

This sequence belongs to the NifU family. Homodimer; Tyr-36-mediated dimerization of two iron- and sulfide-containing ISCU subunit bind to the cysteine desulfurase complex. Component of the mitochondrial core iron-sulfur cluster (ISC) complex composed of NFS1, LYRM4, NDUFAB1, ISCU, FXN, and FDX2; this complex is a heterohexamer containing two copies of each monomer. Interacts (D-state) with NFS1 (homodimer form); each monomer interacts with the C-terminal regions of each NFS1 monomer. Interacts (monomer form) with FXN (via ferrous form); the interaction is possible when both are bound to the dimeric form of the cysteine desulfurase complex (NFS1:LYRM4) and enhances FXN interaction to the dimeric form of the cysteine desulfurase complex (NFS1:LYRM4). Interacts with GLRX5. Interacts (D-state) with HSPA9. Interacts (S-state) with HSCB; this interaction stimulates the ATPase activity of HSPA9. Component of a complex composed of FXN, NFS1, LYRM4 and ISCU. Post-translationally, cysteine persulfide is reduced by thiol-containing molecules such as glutathione and L-cysteine. Phosphorylation at Ser-15 is required for ISCU protein stabilization in the cytosol, whereas dephosphorylation of Ser-15, due to the inhibition of mTORC1 (mammalian target of rapamycin complex 1) complex, leads to degradation of the precursor form and ultimately to a decrease in the mitochondrial mature form.

The protein localises to the mitochondrion. In terms of biological role, mitochondrial scaffold protein, of the core iron-sulfur cluster (ISC) assembly complex, that provides the structural architecture on which the [2Fe-2S] clusters are assembled. The core iron-sulfur cluster (ISC) assembly complex is involved in the de novo synthesis of a [2Fe-2S] cluster, the first step of the mitochondrial iron-sulfur protein biogenesis. This process is initiated by the cysteine desulfurase complex (NFS1:LYRM4:NDUFAB1) that produces persulfide which is delivered on the scaffold protein ISCU in a FXN-dependent manner. Then this complex is stabilized by FDX2 which provides reducing equivalents to accomplish the [2Fe-2S] cluster assembly. Finally, the [2Fe-2S] cluster is transferred from ISCU to chaperone proteins, including HSCB, HSPA9 and GLRX5. Exists as two slow interchanging conformational states, a structured (S) and disordered (D) form. May modulate NFS1 desulfurase activity in a zinc-dependent manner. Modulates the interaction between FXN and the cysteine desulfurase complex. The polypeptide is Iron-sulfur cluster assembly enzyme ISCU (Mus musculus (Mouse)).